Consider the following 249-residue polypeptide: O-methyltransferase adaD (249 aa).

Positions 1–15 (MSSVTLTTTTTTTST) are enriched in low complexity. Residues 1-26 (MSSVTLTTTTTTTSTPPKPTPKDEPQ) are disordered.

Belongs to the methyltransferase superfamily.

The catalysed reaction is 2-acetyl-3,4a,8,10,11,12a-hexahydroxy-1,4,4a,5,12,12a-hexahydrotetracene-1,12-dione + S-adenosyl-L-methionine = TAN-1612 + S-adenosyl-L-homocysteine + H(+). It functions in the pathway secondary metabolite biosynthesis. O-methyltransferase; part of the gene cluster that mediates the biosynthesis of the linear tetracyclic TAN-1612 neuropeptide Y receptor antagonist. The decaketide backbone of TAN-1612 is synthesized by the non-reducing polyketide synthase adaA via condensation of one acetyl-CoA starter unit with 9 malonyl-CoA units. The FAD-dependent monooxygenase adaC then performs hydroxylation at C2 while the polaketide chain is still attached to the NRPKS adaA. The alpha-hydroxylation step at C2 appears to be crucial for the following C18-C1 Claisen cyclization and release of the C9-hydroxyl version of TAN-1612 from the NRPKS adaA, two steps performed by the lactamase-like protein adaB. Finally, the O-methyltransferase adaD performs the C9 O-methylation to complete the biosynthesis of TAN-1612. The polypeptide is O-methyltransferase adaD (Aspergillus niger).